The chain runs to 59 residues: Large ribosomal subunit protein uL30 (59 aa).

Belongs to the universal ribosomal protein uL30 family. As to quaternary structure, part of the 50S ribosomal subunit.

The chain is Large ribosomal subunit protein uL30 from Alkaliphilus oremlandii (strain OhILAs) (Clostridium oremlandii (strain OhILAs)).